Reading from the N-terminus, the 351-residue chain is ATP-dependent 6-phosphofructokinase subunit gamma (351 aa).

As to quaternary structure, heterododecamer of 4 alpha, 4 beta and 4 gamma chains. The gamma chain bridges the N-terminal halves of the alpha and beta subunits.

Its subcellular location is the cytoplasm. It participates in carbohydrate degradation; glycolysis; D-glyceraldehyde 3-phosphate and glycerone phosphate from D-glucose: step 3/4. Its function is as follows. Structural subunit of pyrophosphate--fructose 6-phosphate 1-phosphotransferase. Not required for catalytic activity. Fine-tunes allosteric regulation of the ATP-PFK by ATP, fructose 2,6-bisphosphate and AMP. In Komagataella pastoris (Yeast), this protein is ATP-dependent 6-phosphofructokinase subunit gamma (PFK3).